The following is a 548-amino-acid chain: Myrosinase (548 aa).

The first 20 residues, 1 to 20, serve as a signal peptide directing secretion; it reads MKLLHGLALVFLLAAASCKA. 3 disulfides stabilise this stretch: Cys26–Cys458, Cys34–Cys454, and Cys226–Cys236. A substrate-binding site is contributed by Gln59. Residues His76 and Asp90 each coordinate Zn(2+). An N-linked (GlcNAc...) asparagine glycan is attached at Asn110. Residues His161 and Asn206 each coordinate substrate. Residue Gln207 coordinates L-ascorbate. The N-linked (GlcNAc...) asparagine glycan is linked to Asn240. An L-ascorbate-binding site is contributed by Arg281. A glycan (N-linked (GlcNAc...) asparagine) is linked at Asn331. Tyr352 lines the substrate pocket. Glu429 serves as the catalytic Nucleophile. Substrate-binding positions include Trp477 and 484-485; that span reads EF. An N-linked (GlcNAc...) asparagine glycan is attached at Asn520.

This sequence belongs to the glycosyl hydrolase 1 family. As to quaternary structure, homodimer. In terms of tissue distribution, in vacuoles called myrosin grains of a certain class of cells, myrosin cells, distributed in the cotyledons and the axis of the embryo as well as in different organs of the growing plant.

The protein localises to the vacuole. It catalyses the reaction a thioglucoside + H2O = a sugar + a thiol.. In terms of biological role, degradation of glucosinolates (glucose residue linked by a thioglucoside bound to an amino acid derivative) to glucose, sulfate and any of the products: thiocyanates, isothiocyanates, nitriles, epithionitriles or oxazolidine-2-thiones. The sequence is that of Myrosinase from Brassica napus (Rape).